Here is a 608-residue protein sequence, read N- to C-terminus: Fatty acid amide hydrolase (608 aa).

Catalysis depends on charge relay system residues K206 and S282. 303 to 306 lines the substrate pocket; sequence GGGS. The active-site Acyl-ester intermediate is S306.

This sequence belongs to the amidase family. As to quaternary structure, forms homodimers.

The protein resides in the endoplasmic reticulum membrane. The protein localises to the cell membrane. It catalyses the reaction N-(9Z,12Z-octadecadienoyl)-ethanolamine + H2O = ethanolamine + (9Z,12Z)-octadecadienoate. It carries out the reaction N-hexadecanoylethanolamine + H2O = ethanolamine + hexadecanoate. The catalysed reaction is N-dodecanoylethanolamine + H2O = dodecanoate + ethanolamine. With respect to regulation, inhibited by methyl arachidonyl fluorophosphonate (MAFP). Functionally, catalyzes the hydrolysis of bioactive endogenous fatty acid amides to their corresponding acids. The hydrolysis of endogenous amidated lipids terminates their participation as lipid mediators in various signaling systems. Converts a wide range of N-acylethanolamines (NAEs) to their corresponding free fatty acids and ethanolamine. This chain is Fatty acid amide hydrolase, found in Oryza sativa subsp. japonica (Rice).